The sequence spans 465 residues: Siroheme synthase (465 aa).

A precorrin-2 dehydrogenase /sirohydrochlorin ferrochelatase region spans residues 1–203 (MDFLPLFHSL…GRPAEAERLL (203 aa)). NAD(+) is bound by residues 22-23 (EV) and 43-44 (PQ). The residue at position 128 (serine 128) is a Phosphoserine. The tract at residues 217–465 (GEVYLVGAGP…AWFEGAREGA (249 aa)) is uroporphyrinogen-III C-methyltransferase. S-adenosyl-L-methionine is bound at residue proline 226. Aspartate 249 functions as the Proton acceptor in the catalytic mechanism. Lysine 271 acts as the Proton donor in catalysis. Residues 302–304 (GGD), isoleucine 307, 332–333 (TA), methionine 384, and glycine 413 contribute to the S-adenosyl-L-methionine site.

This sequence in the N-terminal section; belongs to the precorrin-2 dehydrogenase / sirohydrochlorin ferrochelatase family. It in the C-terminal section; belongs to the precorrin methyltransferase family.

The catalysed reaction is uroporphyrinogen III + 2 S-adenosyl-L-methionine = precorrin-2 + 2 S-adenosyl-L-homocysteine + H(+). The enzyme catalyses precorrin-2 + NAD(+) = sirohydrochlorin + NADH + 2 H(+). It carries out the reaction siroheme + 2 H(+) = sirohydrochlorin + Fe(2+). It participates in cofactor biosynthesis; adenosylcobalamin biosynthesis; precorrin-2 from uroporphyrinogen III: step 1/1. It functions in the pathway cofactor biosynthesis; adenosylcobalamin biosynthesis; sirohydrochlorin from precorrin-2: step 1/1. The protein operates within porphyrin-containing compound metabolism; siroheme biosynthesis; precorrin-2 from uroporphyrinogen III: step 1/1. Its pathway is porphyrin-containing compound metabolism; siroheme biosynthesis; siroheme from sirohydrochlorin: step 1/1. It participates in porphyrin-containing compound metabolism; siroheme biosynthesis; sirohydrochlorin from precorrin-2: step 1/1. In terms of biological role, multifunctional enzyme that catalyzes the SAM-dependent methylations of uroporphyrinogen III at position C-2 and C-7 to form precorrin-2 via precorrin-1. Then it catalyzes the NAD-dependent ring dehydrogenation of precorrin-2 to yield sirohydrochlorin. Finally, it catalyzes the ferrochelation of sirohydrochlorin to yield siroheme. In Pseudomonas paraeruginosa (strain DSM 24068 / PA7) (Pseudomonas aeruginosa (strain PA7)), this protein is Siroheme synthase.